The following is a 384-amino-acid chain: Organic solute transporter alpha-like protein 1 (384 aa).

Over 1–38 (MEIVKTIIPHNRSYIEPPIPSATEWLANMSVMHVSCLT) the chain is Extracellular. N11 and N28 each carry an N-linked (GlcNAc...) asparagine glycan. A helical transmembrane segment spans residues 39–59 (IACVFVAITFLSSFFHLFFVL). Residues 60 to 70 (KYVSNERIRND) are Cytoplasmic-facing. The helical transmembrane segment at 71 to 91 (MYALIFMFPITTFASLVGMFI) threads the bilayer. At 92–93 (PR) the chain is on the extracellular side. Residues 94 to 114 (AAIFLYAVSLVYFMFTLFIMV) traverse the membrane as a helical segment. Residues 115 to 165 (TLLFNIFGGRQEMSAYLLQRNIRVNFTVPPLCFFKFLPTVESTDQNLRRIE) lie on the Cytoplasmic side of the membrane. The helical transmembrane segment at 166 to 186 (WLVFQTPIIRTLLELVSVVVS) threads the bilayer. The Extracellular segment spans residues 187-202 (MEQEGRRESVWFVFSQ). A helical membrane pass occupies residues 203–223 (LMALLSMCIAFYGCYVMVPLG). The Cytoplasmic portion of the chain corresponds to 224–240 (REKHAPYRFDFLFRTCD). A helical transmembrane segment spans residues 241 to 261 (IAQCIYTIQKFVFEFAAAVGL). Topologically, residues 262–273 (ITSDRYLPAAAK) are extracellular. The helical transmembrane segment at 274-294 (ALWWASFMCTWEMMLLSALCS) threads the bilayer. The Cytoplasmic portion of the chain corresponds to 295–384 (YCLRPAKCKF…FDSLSQIQGQ (90 aa)).

The protein belongs to the OST-alpha family.

It is found in the cell membrane. In terms of biological role, probable transporter. This is Organic solute transporter alpha-like protein 1 (osta-1) from Caenorhabditis elegans.